The chain runs to 186 residues: Potassium-transporting ATPase KdpC subunit 1 (186 aa).

The chain crosses the membrane as a helical span at residues 10 to 30 (LTIITMVLCGFLFPLAITLIG).

It belongs to the KdpC family. In terms of assembly, the system is composed of three essential subunits: KdpA, KdpB and KdpC.

The protein localises to the cell membrane. Functionally, part of the high-affinity ATP-driven potassium transport (or Kdp) system, which catalyzes the hydrolysis of ATP coupled with the electrogenic transport of potassium into the cytoplasm. This subunit acts as a catalytic chaperone that increases the ATP-binding affinity of the ATP-hydrolyzing subunit KdpB by the formation of a transient KdpB/KdpC/ATP ternary complex. The sequence is that of Potassium-transporting ATPase KdpC subunit 1 from Staphylococcus aureus (strain Mu50 / ATCC 700699).